The sequence spans 197 residues: MADMGIQPSVFDRLLKDRIIWLGSEVRDENANEIAAKLLLLAAEDSKRDIYLYINSPGGSITAGMAIYDTMQFVPNDIVTVGIGMAASMGQLLLTAGTKGKRYITPNARVLLHQPHGGFGGTASDIRTQAQLILHMKKRLAEITSEATGKTVDQVNADGDRDRWFTAQEALDYGFVDHIRESALLVAGGGGTAPAGK.

Ser-88 functions as the Nucleophile in the catalytic mechanism. Residue His-113 is part of the active site.

The protein belongs to the peptidase S14 family. As to quaternary structure, fourteen ClpP subunits assemble into 2 heptameric rings which stack back to back to give a disk-like structure with a central cavity, resembling the structure of eukaryotic proteasomes.

It is found in the cytoplasm. It catalyses the reaction Hydrolysis of proteins to small peptides in the presence of ATP and magnesium. alpha-casein is the usual test substrate. In the absence of ATP, only oligopeptides shorter than five residues are hydrolyzed (such as succinyl-Leu-Tyr-|-NHMec, and Leu-Tyr-Leu-|-Tyr-Trp, in which cleavage of the -Tyr-|-Leu- and -Tyr-|-Trp bonds also occurs).. Its function is as follows. Cleaves peptides in various proteins in a process that requires ATP hydrolysis. Has a chymotrypsin-like activity. Plays a major role in the degradation of misfolded proteins. The chain is ATP-dependent Clp protease proteolytic subunit 1 from Leifsonia xyli subsp. xyli (strain CTCB07).